We begin with the raw amino-acid sequence, 135 residues long: ATP synthase epsilon chain (135 aa).

The protein belongs to the ATPase epsilon chain family. In terms of assembly, F-type ATPases have 2 components, CF(1) - the catalytic core - and CF(0) - the membrane proton channel. CF(1) has five subunits: alpha(3), beta(3), gamma(1), delta(1), epsilon(1). CF(0) has three main subunits: a, b and c.

It localises to the cell inner membrane. Its function is as follows. Produces ATP from ADP in the presence of a proton gradient across the membrane. This Rhizobium etli (strain ATCC 51251 / DSM 11541 / JCM 21823 / NBRC 15573 / CFN 42) protein is ATP synthase epsilon chain.